A 317-amino-acid chain; its full sequence is HTH-type transcriptional repressor PA14_22550 (317 aa).

An HTH lysR-type domain is found at 1–59; the sequence is MDKLTAMATFVKVVDAGSFTRAADALGLPKARVSQRVSDLEKHLGVRLLNRTTRALSLT. Positions 19-38 form a DNA-binding region, H-T-H motif; it reads FTRAADALGLPKARVSQRVS.

Belongs to the LysR transcriptional regulatory family.

In terms of biological role, represses the transcription of the operon that consists of PA14_22510 to PA14_22540. The chain is HTH-type transcriptional repressor PA14_22550 from Pseudomonas aeruginosa (strain UCBPP-PA14).